Here is a 352-residue protein sequence, read N- to C-terminus: Ion-translocating oxidoreductase complex subunit D (352 aa).

The next 4 membrane-spanning stretches (helical) occupy residues 20-40 (IMLLVVIAALPGIAAQTWFFG), 42-62 (GTLFQIVLAAITALVAEAIVL), 69-91 (VASHLQDYSALLTGLLLAVSIPP), and 123-143 (PAMIGYVVLLISFPVQMTSWL). Threonine 187 carries the FMN phosphoryl threonine modification. 5 consecutive transmembrane segments (helical) span residues 215-235 (LAGVGWQWVNLAWLVGGVFLL), 242-262 (WHIPVSFLLTLALCAALGWLF), 267-287 (LASPQLHLLSGATMLGAFFIL), 301-321 (LIFGALAGVLVWLIRSFGGYP), and 322-342 (DGVAFAVLLANITVPLIDYYT).

It belongs to the NqrB/RnfD family. In terms of assembly, the complex is composed of six subunits: RsxA, RsxB, RsxC, RsxD, RsxE and RsxG. FMN is required as a cofactor.

It is found in the cell inner membrane. Functionally, part of a membrane-bound complex that couples electron transfer with translocation of ions across the membrane. Required to maintain the reduced state of SoxR. The sequence is that of Ion-translocating oxidoreductase complex subunit D from Salmonella agona (strain SL483).